We begin with the raw amino-acid sequence, 459 residues long: tRNA modification GTPase MnmE (459 aa).

Arg23, Glu86, and Arg125 together coordinate (6S)-5-formyl-5,6,7,8-tetrahydrofolate. Positions 221-380 constitute a TrmE-type G domain; sequence GIDAVIIGKP…LENAITELFV (160 aa). Asn231 is a K(+) binding site. GTP-binding positions include 231-236, 250-256, and 275-278; these read NVGKSS, TDIPGTT, and DTAG. Ser235 contacts Mg(2+). The K(+) site is built by Thr250, Ile252, and Thr255. Residue Thr256 coordinates Mg(2+). Lys459 lines the (6S)-5-formyl-5,6,7,8-tetrahydrofolate pocket.

It belongs to the TRAFAC class TrmE-Era-EngA-EngB-Septin-like GTPase superfamily. TrmE GTPase family. In terms of assembly, homodimer. Heterotetramer of two MnmE and two MnmG subunits. K(+) serves as cofactor.

The protein localises to the cytoplasm. Its function is as follows. Exhibits a very high intrinsic GTPase hydrolysis rate. Involved in the addition of a carboxymethylaminomethyl (cmnm) group at the wobble position (U34) of certain tRNAs, forming tRNA-cmnm(5)s(2)U34. This is tRNA modification GTPase MnmE from Acetivibrio thermocellus (strain ATCC 27405 / DSM 1237 / JCM 9322 / NBRC 103400 / NCIMB 10682 / NRRL B-4536 / VPI 7372) (Clostridium thermocellum).